The chain runs to 452 residues: Inner membrane metabolite transport protein YdjE (452 aa).

The Cytoplasmic portion of the chain corresponds to 1–20 (MEQYDQIGARLDRLPLARFH). Residues 21 to 43 (YRIFGIISFSLLLTGFLSYSGNV) traverse the membrane as a helical segment. Over 44–57 (VLAKLVSNGWSNNF) the chain is Periplasmic. The helical transmembrane segment at 58 to 80 (LNAAFTSALMFGYFIGSLTGGFI) threads the bilayer. Over 81-91 (GDYFGRRRAFR) the chain is Cytoplasmic. Residues 92 to 114 (INLLIVGIAATGAAFVPDMYWLI) form a helical membrane-spanning segment. The Periplasmic segment spans residues 115–117 (FFR). Residues 118–140 (FLMGTGMGALIMVGYASFTEFIP) form a helical membrane-spanning segment. Topologically, residues 141–152 (ATVRGKWSARLS) are cytoplasmic. A helical transmembrane segment spans residues 153 to 175 (FVGNWSPMLSAAIGVVVIAFFSW). Topologically, residues 176 to 178 (RIM) are periplasmic. The helical transmembrane segment at 179–198 (FLLGGIGILLAWFLSGKYFI) threads the bilayer. Over 199–265 (ESPRWLAGKG…KGEMLRRTLV (67 aa)) the chain is Cytoplasmic. Residues 266–288 (AITVLIAMNISLYTITVWIPTIF) traverse the membrane as a helical segment. At 289-297 (VNSGIDVDK) the chain is on the periplasmic side. A helical membrane pass occupies residues 298–320 (SILMTAVIMIGAPVGIFIAALII). The Cytoplasmic portion of the chain corresponds to 321 to 326 (DHFPRR). The helical transmembrane segment at 327–344 (LFGSTLLIIIAVLGYIYS) threads the bilayer. Residues 345-353 (IQTTEWAIL) lie on the Periplasmic side of the membrane. A helical transmembrane segment spans residues 354–376 (IYGLVMIFFLYMYVCFASAVYIP). Over 377–388 (ELWPTHLRLRGS) the chain is Cytoplasmic. A helical transmembrane segment spans residues 389-411 (GFVNAVGRIVAVFTPYGVAALLT). Over 412-415 (HYGS) the chain is Periplasmic. Residues 416–438 (ITVFMVLGVMLLLCALVLSIFGI) traverse the membrane as a helical segment. At 439 to 452 (ETRKVSLEEISEVN) the chain is on the cytoplasmic side.

The protein belongs to the major facilitator superfamily. Sugar transporter (TC 2.A.1.1) family.

It is found in the cell inner membrane. The sequence is that of Inner membrane metabolite transport protein YdjE (ydjE) from Escherichia coli (strain K12).